A 785-amino-acid chain; its full sequence is Endonuclease MutS2 (785 aa).

332–339 contributes to the ATP binding site; it reads GPNTGGKT. The 76-residue stretch at 710 to 785 folds into the Smr domain; the sequence is IDLRGLDAEE…GDGATIVELK (76 aa).

The protein belongs to the DNA mismatch repair MutS family. MutS2 subfamily. Homodimer. Binds to stalled ribosomes, contacting rRNA.

Endonuclease that is involved in the suppression of homologous recombination and thus may have a key role in the control of bacterial genetic diversity. In terms of biological role, acts as a ribosome collision sensor, splitting the ribosome into its 2 subunits. Detects stalled/collided 70S ribosomes which it binds and splits by an ATP-hydrolysis driven conformational change. Acts upstream of the ribosome quality control system (RQC), a ribosome-associated complex that mediates the extraction of incompletely synthesized nascent chains from stalled ribosomes and their subsequent degradation. Probably generates substrates for RQC. The sequence is that of Endonuclease MutS2 from Clostridium botulinum (strain Eklund 17B / Type B).